A 628-amino-acid polypeptide reads, in one-letter code: Probable potassium transport system protein Kup (628 aa).

Helical transmembrane passes span 56-76 (ILSL…VLLI), 109-129 (LILG…TPAI), 141-161 (AAPG…TLLF), 174-194 (FFGP…VVHI), 209-229 (ALAF…AVVL), 253-273 (WFSL…AMLL), 295-315 (LIVL…TAAF), 343-363 (IYVP…VVTF), 372-392 (AYGI…FFVI), 400-420 (WALC…FFAA), and 425-445 (ILDG…LMMT).

Belongs to the HAK/KUP transporter (TC 2.A.72) family.

The protein resides in the cell inner membrane. The catalysed reaction is K(+)(in) + H(+)(in) = K(+)(out) + H(+)(out). In terms of biological role, transport of potassium into the cell. Likely operates as a K(+):H(+) symporter. In Methylibium petroleiphilum (strain ATCC BAA-1232 / LMG 22953 / PM1), this protein is Probable potassium transport system protein Kup.